The sequence spans 247 residues: Uridylate kinase (247 aa).

Position 15-18 (15-18) interacts with ATP; sequence KLSG. The involved in allosteric activation by GTP stretch occupies residues 23 to 28; the sequence is GDEGFG. Residue G57 coordinates UMP. ATP-binding residues include G58 and R62. Residues D77 and 138-145 contribute to the UMP site; that span reads TGNPFFTT. ATP is bound by residues T165, Y171, and D174.

This sequence belongs to the UMP kinase family. As to quaternary structure, homohexamer.

The protein resides in the cytoplasm. The enzyme catalyses UMP + ATP = UDP + ADP. The protein operates within pyrimidine metabolism; CTP biosynthesis via de novo pathway; UDP from UMP (UMPK route): step 1/1. With respect to regulation, allosterically activated by GTP. Inhibited by UTP. Functionally, catalyzes the reversible phosphorylation of UMP to UDP. The sequence is that of Uridylate kinase from Saccharophagus degradans (strain 2-40 / ATCC 43961 / DSM 17024).